Reading from the N-terminus, the 353-residue chain is Quinolinate synthase (353 aa).

Residues H47 and S68 each coordinate iminosuccinate. Residue C113 participates in [4Fe-4S] cluster binding. Iminosuccinate contacts are provided by residues 139–141 (YAN) and S156. Residue C200 coordinates [4Fe-4S] cluster. Residues 226–228 (HPE) and T243 each bind iminosuccinate. [4Fe-4S] cluster is bound at residue C297.

It belongs to the quinolinate synthase family. Type 1 subfamily. The cofactor is [4Fe-4S] cluster.

It localises to the cytoplasm. It catalyses the reaction iminosuccinate + dihydroxyacetone phosphate = quinolinate + phosphate + 2 H2O + H(+). The protein operates within cofactor biosynthesis; NAD(+) biosynthesis; quinolinate from iminoaspartate: step 1/1. Catalyzes the condensation of iminoaspartate with dihydroxyacetone phosphate to form quinolinate. In Photobacterium profundum (strain SS9), this protein is Quinolinate synthase.